The primary structure comprises 368 residues: 3-dehydroquinate synthase (368 aa).

The protein belongs to the archaeal-type DHQ synthase family.

The catalysed reaction is 2-amino-2,3,7-trideoxy-D-lyxo-hept-6-ulosonate + NAD(+) + H2O = 3-dehydroquinate + NH4(+) + NADH + H(+). Catalyzes the oxidative deamination and cyclization of 2-amino-3,7-dideoxy-D-threo-hept-6-ulosonic acid (ADH) to yield 3-dehydroquinate (DHQ), which is fed into the canonical shikimic pathway of aromatic amino acid biosynthesis. This is 3-dehydroquinate synthase from Methanobrevibacter smithii (strain ATCC 35061 / DSM 861 / OCM 144 / PS).